We begin with the raw amino-acid sequence, 87 residues long: X protein (87 aa).

Positions 5 to 16 are nuclear export signal; the sequence is LRLTLLELVRRL. The segment at 18–87 is disordered; sequence GNATIESGRL…PANRKGAAVE (70 aa). Low complexity predominate over residues 36–48; that stretch reads DTTTGTTGVTKTT.

As to quaternary structure, interacts with P and N proteins. These interactions presumably promote nuclear targeting of the X protein in infected cells. Interacts with host MAVS; this interaction inhibits MAVS-induced apoptosis. Post-translationally, phosphorylated.

Its subcellular location is the host nucleus. It is found in the host mitochondrion. Its function is as follows. Plays an essential role in the inhibition of host apoptosis. Mediates host mitochondria-mediated apoptosis through interaction with the mitochondrial antiviral signaling protein/MAVS and thereby promotes viral persistence in host central nervous system. Within the host nucleus, regulates viral RNA synthesis and polymerase complex assembly. The polypeptide is X protein (P/X) (Borna disease virus 1 (BoDV-1)).